Here is a 35-residue protein sequence, read N- to C-terminus: uncharacterized protein (35 aa).

This is an uncharacterized protein from Escherichia coli (Bacteriophage T3).